Reading from the N-terminus, the 2496-residue chain is MPKLLESIVTVIDVFYQYATEYGNCDMLSKEEMKELLVTEFHQILKNPDDPDTVDIIMQNLDRDHNHKVDFTEYLLMILKLTKACNKIIGKDYCQASGSKQKNHSHQHQEEQSKKETENKEQKGSISSSAGENDSYSRGSRGSNKSKSKKLRKGKEQSSKQTTKSNSSDHENSEDYEQGQHESGFSNSSGNGRPSSRKASGFPQPGSEQGQSSSSSTKGSGECYSSGNGKHGSSSGGSAVSGSGHSNTYGKQGTGSRHSSSNRRSRSTSRESSGSQEYSSGSSEEPGFTHGSGRKNSSTCGKNGSYSGQSTGRHQQGFGSSHELESGQSITSANHGSHSNQSSCSGTRECGSSESSMKKTHVSGSGHSSSTGKYTSTSGQNYNSTRQGCGQGKSSGSEQYGASSGQSSGCSSGQSTRYGEQGSGSRNSSTQSRGRSTSRESSTSQQFGSGSGRSSGFSQGGSGQGRSSRGGQQGSFSGQTEGSQQHGSCCGQSSGYGQNEYGSGHSASSGQQGSHYSQSSSYGTHNSGGSPSSSQRGHGSRSGRSSGLGQYGSPSGQTSSSTRQGSGQGQASGSGRYGASSGQTSGCGSGQSTRYGEQGSGSRNSSTQSRGRSTSRESSTSQRYGSGSGESSGFSQGGSGQGRSSRGGQQGSFSGQTSGRSQHQSGSRHGSGSGQFPISGQQGSHHGHSSSSGTHNSGSSQSSSTQWSHGSGSEQSSGLGHYGSTSGQTASSTRQGSGQGQASGSGRCGASSGQTSGCGSGQSTRYGEQGSGSRNSSTQSRGRSTSRESSTSQRFGSGSGGSSGFSQGRSGQGRSSRGGQQGSFSGQTEGSQQHGSCCGQSSGYGQNEYGSGHSASSGQQGSHYSQSSSYGTHNSGGSPSSRPAGGHGSRSGRSSGLGQYGSPSGQTSSSTRQGSGQGQASGSGRYGASSGQTSGCGSGQSTRYGEQGSGSRNSSTQSRGRSTSRESSTSQRYGSGSGESSGFSQGGSGQGRSSRGGQQGSFSGQTSGRSQHQSGSRHGSGSGQFPISGQQGSHHGHSSSSGTHNSGSSQSSSTQWSHGSGSEQSSGLGHYGSTSGQTASSTRQGSGQGQASGSGRCGASSGQTSGCGSGQSTRYGEQGSGSRNSSTQSRGRSTSRESSTSQRFGSGSGGSSGFSQGRSGQGRSSRGGQQGSFSGQTEGSQQHGSCCGQSSGYGQNEYGSGHSASSGQQGSHYSQSSSYGTHNSGGSPSSSQRGHGSRSGRSSGLGQYGSPSGQTSSSTRQGSGQGQASGSGRYGASSGQTSGCRSGQSTRYGGQGSGSRNSSTQSRGRSTSRESSTSQRYGSGSGESSGFSQGGSGQGRSSRGGQQGSFSGQTSGRNQHQSGSRHGSGSGQFPISGQQGSHHGHSSSSGTHNSGSSQSSSTQWSHGSGSEQSSGLGHYGSTSGQTASSTRQGSGQGQASGSGRCGASSGQTSGCGSGQSTRYGEQGSGSRNSSTQSRGRSTSRESSTSQRFGSGSGGSSGFSQGRSGQGRSSRGGQQGSFSGQTEGSQQHGSCCGQSSGYGQNEYGSGHSASSGQQGSHYSQSSSYGTHNSGGSPSSSQRGHGSRSGRSSGLGQYGSPSGQTSSSTRQGSGQGQASGSGRYGASSGQTSGCGSGQPTRYGEQGSGSRNSSTQSRGRSTSRESSTSQRCGSGSGESSGFSQGGSGQGRSSRGGQQGSFSGQTSGRSQHQSGSRHGSGSGQFPISGQQGSHHGHSSSSGTHNSGSSQSSSTQWSHGSGSEQSSGLGHYGSTSGQTASSTRQGSGQGQASGSGRCGASSGQTSGCGSDQSTRYGEQGSGSRNSSTQSRGRSTSRESSTSQRFGSGSGGSSGFSQGRSGQGRSSRGGQQGSFSGQTEGSQQHGSCCGQSSGYGQNEYGSGHSASSGQQGSHYSQSSSYGTHNSGGSPSSSQRGHGSRSGRSSGLGQYGSPSGQTSSSTRQGSGQGQASGSGRYGASSGQTSGCGSGQSTRYGEQGSGSRNSSTQSRGRSTSRESSTSQRYGSGSGESSGFSQGGSGQGRSSRGGQQGSFSGQTSGRSQHQSGSRHGSGSGQFPISGQQGSHHGHSSSSGTHNSGSSQSSSTQWSHGSGSEQSSGLGHYGSTSGQTASSTRQGSGQGQASGSGRCGASSGQTSGCGSGQSTRYGEQGSGSRNSSTQSRGRSTSRESSTSQRYGSGSGESSGFSQGGSGQGRSSRGGQQGSFSGQTSGRSQHQSGSRHGSGSGQFPISGQQGSHHGHSSSSGTHNSGSSQSSSTQWSHGSGSEQSSGLGQYGSPSGQTSSSTRQGSGQGQASGSGRYGASSGQTSGCGSGQSTRYGEQGSGSRNSSTQSRGRSTSRESSTSQRYGSGSGESSGFSQGGSGQGRSSRGGQQGSFSGQTSGRSQHQSGSRHGSGSGQFPISGQQGSHHGHSSSSGTHNSGSSQSSSTQWSHGSGSEQSSGLGHYGSTSGQTASSTRQGSGQGQASGSGRCGASSGQTSGCGSG.

The S-100-like stretch occupies residues Met-1–Leu-81. EF-hand domains follow at residues Asp-13–Pro-48 and Asp-49–Ala-84. The Ca(2+) site is built by Met-27, Glu-32, Asp-62, Asp-64, Asn-66, Lys-68, and Glu-73. A s (spacer) region spans residues Thr-82 to Gly-98. A disordered region spans residues Ser-97–Gly-2496. Residues Ser-99–Lys-145 form a 1; truncated repeat. The segment covering Gln-107–Lys-123 has biased composition (basic and acidic residues). Over residues Gly-124–Asp-134 the composition is skewed to polar residues. The span at Asn-144 to Lys-153 shows a compositional bias: basic residues. 27 consecutive repeat copies span residues Ser-146–His-231, Gly-232–Ser-321, Ser-326–Tyr-400, Gly-401–Gly-491, Gln-492–Tyr-577, Gly-578–Arg-668, His-669–Cys-748, Gly-749–Gly-839, Gln-840–Tyr-926, Gly-927–Arg-1017, His-1018–Cys-1097, Gly-1098–Gly-1188, Gln-1189–Tyr-1274, Gly-1275–Arg-1365, His-1366–Cys-1445, Gly-1446–Gly-1536, Gln-1537–Tyr-1622, Gly-1623–Arg-1713, His-1714–Cys-1793, Gly-1794–Gly-1884, Gln-1885–Tyr-1970, Gly-1971–Arg-2061, His-2062–Cys-2141, Gly-2142–Arg-2232, His-2233–Tyr-2312, Gly-2313–Arg-2403, and Gln-2410–Gly-2496. Composition is skewed to low complexity over residues Ser-183–Pro-194, Ser-200–Ser-246, and Arg-270–Pro-286. Polar residues-rich tracts occupy residues Arg-294–Gly-319 and Ser-326–Ser-355. Low complexity-rich tracts occupy residues Val-362–Gly-379, Ser-394–Ser-415, and Ser-423–Gly-448. Positions Ser-449–Gln-464 are enriched in gly residues. Residues Gly-465–Gly-565 show a composition bias toward low complexity. A phosphoserine mark is found at Ser-506 and Ser-508. A compositionally biased stretch (gly residues) spans Ser-566–Arg-576. 2 stretches are compositionally biased toward low complexity: residues Tyr-577–Thr-593 and Ser-600–Gly-625. Residues Ser-626–Gln-641 show a composition bias toward gly residues. Composition is skewed to low complexity over residues Gly-642–Gly-670 and Ser-679–Ser-713. The residue at position 646 (Arg-646) is an Omega-N-methylarginine. At Ser-716 the chain carries Phosphoserine. Over residues Gly-723–Gly-736 the composition is skewed to low complexity. The span at Ser-737–Arg-747 shows a compositional bias: gly residues. 4 stretches are compositionally biased toward low complexity: residues Cys-748 to Thr-764, Ser-771 to Gly-796, Gly-804 to Ala-884, and Ser-891 to Gly-914. Ser-815 is subject to Phosphoserine. A compositionally biased stretch (gly residues) spans Ser-915–Arg-925. 2 stretches are compositionally biased toward low complexity: residues Tyr-926 to Thr-942 and Ser-949 to Gly-974. The span at Ser-975 to Gln-990 shows a compositional bias: gly residues. Low complexity-rich tracts occupy residues Gly-991–Gly-1019, Ser-1028–Ser-1062, and Gly-1072–Gly-1085. Arg-995 is modified (omega-N-methylarginine). Residues Ser-1086–Arg-1096 show a composition bias toward gly residues. 3 stretches are compositionally biased toward low complexity: residues Cys-1097–Thr-1113, Ser-1120–Gly-1145, and Gly-1153–Gly-1262. Residue Ser-1229 is modified to Phosphoserine. Positions Ser-1263 to Arg-1273 are enriched in gly residues. Positions Thr-1281 to Tyr-1292 are enriched in polar residues. Residues Gly-1298–Gly-1322 are compositionally biased toward low complexity. Gly residues predominate over residues Ser-1323–Gln-1338. 3 stretches are compositionally biased toward low complexity: residues Gly-1339–Gly-1367, Ser-1376–Ser-1410, and Gly-1420–Gly-1433. The residue at position 1343 (Arg-1343) is an Omega-N-methylarginine. Positions Ser-1434–Arg-1444 are enriched in gly residues. Composition is skewed to low complexity over residues Cys-1445–Thr-1461, Ser-1468–Gly-1493, and Gly-1501–Gly-1610. 2 positions are modified to phosphoserine: Ser-1551 and Ser-1553. The segment covering Ser-1611–Arg-1621 has biased composition (gly residues). 2 stretches are compositionally biased toward low complexity: residues Tyr-1622–Gly-1631 and Ser-1645–Gly-1670. Ser-1650 bears the Phosphoserine mark. Gly residues predominate over residues Ser-1671–Gln-1686. Composition is skewed to low complexity over residues Gly-1687–Gly-1715, Ser-1724–Ser-1758, and Gly-1768–Gly-1781. At Arg-1691 the chain carries Omega-N-methylarginine. Residues Ser-1782–Arg-1792 show a composition bias toward gly residues. Residues Thr-1800–Tyr-1811 show a composition bias toward polar residues. Low complexity-rich tracts occupy residues Ser-1816 to Gly-1841 and Gly-1849 to Gly-1958. The span at Ser-1959 to Arg-1969 shows a compositional bias: gly residues. 2 stretches are compositionally biased toward low complexity: residues Tyr-1970 to Thr-1986 and Ser-1993 to Gly-2018. At Ser-2011 the chain carries Phosphoserine. A compositionally biased stretch (gly residues) spans Ser-2019–Gln-2034. Low complexity-rich tracts occupy residues Gly-2035–Gly-2063 and Ser-2072–Ser-2106. The residue at position 2039 (Arg-2039) is an Omega-N-methylarginine. Phosphoserine occurs at positions 2109 and 2124. The segment covering Gly-2116–Gly-2129 has biased composition (low complexity). The span at Ser-2130–Arg-2140 shows a compositional bias: gly residues. 2 stretches are compositionally biased toward low complexity: residues Cys-2141–Thr-2157 and Ser-2164–Gly-2189. Over residues Ser-2190–Gln-2205 the composition is skewed to gly residues. Low complexity-rich tracts occupy residues Gly-2206–Gly-2234 and Ser-2243–Gly-2300. Arg-2210 is modified (omega-N-methylarginine). The segment covering Ser-2301–Arg-2311 has biased composition (gly residues). Low complexity-rich tracts occupy residues Tyr-2312–Thr-2328 and Ser-2335–Gly-2360. Ser-2353 carries the phosphoserine modification. The span at Ser-2361–Gln-2376 shows a compositional bias: gly residues. Low complexity-rich tracts occupy residues Gly-2377 to Gly-2405, Ser-2414 to Ser-2448, and Gly-2458 to Gly-2471. Arg-2381 bears the Omega-N-methylarginine mark. Positions Ser-2472–Arg-2482 are enriched in gly residues.

It belongs to the S100-fused protein family. This sequence in the N-terminal section; belongs to the S-100 family. Post-translationally, processed during the process of epidermal differentiation. Forms covalent cross-links mediated by transglutaminase TGM3, between glutamine and the epsilon-amino group of lysine residues (in vitro). Embryonic skin. Highest level in the adult forestomach followed by the skin. Lower levels in the tongue, esophagus. Detected in the granular and cornified layers of the mature epidermis.

The protein resides in the cytoplasmic granule. Its function is as follows. Component of the epidermal cornified cell envelopes. This chain is Hornerin (Hrnr), found in Mus musculus (Mouse).